The sequence spans 481 residues: Eukaryotic translation initiation factor 3 subunit L (481 aa).

Positions 1–22 (MSVDARTAYPGSRPPANMQDES) are disordered. One can recognise a PCI domain in the interval 262–457 (DAIRTFSHIL…DLDYAIEGNL (196 aa)).

The protein belongs to the eIF-3 subunit L family. As to quaternary structure, component of the eukaryotic translation initiation factor 3 (eIF-3) complex.

The protein localises to the cytoplasm. Component of the eukaryotic translation initiation factor 3 (eIF-3) complex, which is involved in protein synthesis of a specialized repertoire of mRNAs and, together with other initiation factors, stimulates binding of mRNA and methionyl-tRNAi to the 40S ribosome. The eIF-3 complex specifically targets and initiates translation of a subset of mRNAs involved in cell proliferation. In Coccidioides immitis (strain RS) (Valley fever fungus), this protein is Eukaryotic translation initiation factor 3 subunit L.